A 376-amino-acid polypeptide reads, in one-letter code: Erythronate-4-phosphate dehydrogenase (376 aa).

Substrate contacts are provided by Ser45 and Thr67. Asp147 is an NAD(+) binding site. Arg209 is a catalytic residue. Position 233 (Asp233) interacts with NAD(+). Residue Glu238 is part of the active site. The Proton donor role is filled by His255. Gly258 is an NAD(+) binding site. Position 259 (Tyr259) interacts with substrate.

Belongs to the D-isomer specific 2-hydroxyacid dehydrogenase family. PdxB subfamily. As to quaternary structure, homodimer.

It localises to the cytoplasm. It carries out the reaction 4-phospho-D-erythronate + NAD(+) = (R)-3-hydroxy-2-oxo-4-phosphooxybutanoate + NADH + H(+). It functions in the pathway cofactor biosynthesis; pyridoxine 5'-phosphate biosynthesis; pyridoxine 5'-phosphate from D-erythrose 4-phosphate: step 2/5. In terms of biological role, catalyzes the oxidation of erythronate-4-phosphate to 3-hydroxy-2-oxo-4-phosphonooxybutanoate. This is Erythronate-4-phosphate dehydrogenase from Shewanella baltica (strain OS155 / ATCC BAA-1091).